Here is a 104-residue protein sequence, read N- to C-terminus: Large ribosomal subunit protein bL21 (104 aa).

The protein belongs to the bacterial ribosomal protein bL21 family. Part of the 50S ribosomal subunit. Contacts protein L20.

Its function is as follows. This protein binds to 23S rRNA in the presence of protein L20. The chain is Large ribosomal subunit protein bL21 from Acidiphilium cryptum (strain JF-5).